Here is a 152-residue protein sequence, read N- to C-terminus: Protein-export protein SecB (152 aa).

Belongs to the SecB family. In terms of assembly, homotetramer, a dimer of dimers. One homotetramer interacts with 1 SecA dimer.

It is found in the cytoplasm. Functionally, one of the proteins required for the normal export of preproteins out of the cell cytoplasm. It is a molecular chaperone that binds to a subset of precursor proteins, maintaining them in a translocation-competent state. It also specifically binds to its receptor SecA. The chain is Protein-export protein SecB from Verminephrobacter eiseniae (strain EF01-2).